The following is a 539-amino-acid chain: T-complex protein 1 subunit zeta (539 aa).

The protein belongs to the TCP-1 chaperonin family. As to quaternary structure, heterooligomeric complex of about 850 to 900 kDa that forms two stacked rings, 12 to 16 nm in diameter.

The protein resides in the cytoplasm. Its function is as follows. Molecular chaperone; assists the folding of proteins upon ATP hydrolysis. Known to play a role, in vitro, in the folding of actin and tubulin. In Dictyostelium discoideum (Social amoeba), this protein is T-complex protein 1 subunit zeta (cct6).